Reading from the N-terminus, the 247-residue chain is Granzyme B (247 aa).

An N-terminal signal peptide occupies residues 1 to 18 (MQPILLLLAFLLLPRADA). Positions 19–20 (GE) are cleaved as a propeptide — activation peptide. The region spanning 21–245 (IIGGHEAKPH…FVHWIKKTMK (225 aa)) is the Peptidase S1 domain. Residues Cys49 and Cys65 are joined by a disulfide bond. The active-site Charge relay system is the His64. Residues Asn71 and Asn104 are each glycosylated (N-linked (GlcNAc...) asparagine). The active-site Charge relay system is the Asp108. Disulfide bonds link Cys142/Cys209 and Cys173/Cys188. Ser203 acts as the Charge relay system in catalysis.

The protein belongs to the peptidase S1 family. Granzyme subfamily.

It is found in the secreted. The protein localises to the cytolytic granule. The enzyme catalyses Preferential cleavage: -Asp-|-Xaa- &gt;&gt; -Asn-|-Xaa- &gt; -Met-|-Xaa-, -Ser-|-Xaa-.. With respect to regulation, inactivated by the serine protease inhibitor diisopropylfluorophosphate. Functionally, abundant protease in the cytosolic granules of cytotoxic T-cells and NK-cells which activates caspase-independent pyroptosis when delivered into the target cell through the immunological synapse. It cleaves after Asp. Once delivered into the target cell, acts by catalyzing cleavage of gasdermin-E (GSDME), releasing the pore-forming moiety of GSDME, thereby triggering pyroptosis and target cell death. Seems to be linked to an activation cascade of caspases (aspartate-specific cysteine proteases) responsible for apoptosis execution. Cleaves caspase-3, -9 and -10 (CASP3, CASP9 and CASP10, respectively) to give rise to active enzymes mediating apoptosis. Cleaves and activates CASP7 in response to bacterial infection, promoting plasma membrane repair. In Homo sapiens (Human), this protein is Granzyme B.